A 241-amino-acid polypeptide reads, in one-letter code: uncharacterized protein (241 aa).

The HTH luxR-type domain occupies 147-212 (FSYRSVILTL…EMYAWINSAQ (66 aa)).

This is an uncharacterized protein from Escherichia coli O157:H7.